The sequence spans 524 residues: Probable metalloreductase AIM14 (524 aa).

A run of 7 helical transmembrane segments spans residues 24–44 (VNIKYGYVILALSIVHMVLSI), 69–89 (SIPFWVSTLVWLAIFAFLSIF), 104–121 (RLGRMAYCLVPFTIFISL), 143–163 (WISRLIFATAIGHGLGFLYKW), 179–199 (FLGVTVFALMPVLIFASVNVM), 206–226 (LFYILHNVTLWMFVVLIAFHA), and 230–250 (VPLLAVINLALLGYQIYQRFF). The 118-residue stretch at 105–222 (LGRMAYCLVP…VTLWMFVVLI (118 aa)) folds into the Ferric oxidoreductase domain. The FAD-binding FR-type domain maps to 248-372 (RFFKSYYLHD…GGSGISFGLP (125 aa)).

This sequence belongs to the ferric reductase (FRE) family. AIM14 subfamily.

It localises to the membrane. Its function is as follows. Probable cell surface metalloreductase. May be involved in iron or copper homeostasis. In Scheffersomyces stipitis (strain ATCC 58785 / CBS 6054 / NBRC 10063 / NRRL Y-11545) (Yeast), this protein is Probable metalloreductase AIM14 (AIM14).